A 211-amino-acid chain; its full sequence is ATP phosphoribosyltransferase (211 aa).

The protein belongs to the ATP phosphoribosyltransferase family. Short subfamily. In terms of assembly, heteromultimer composed of HisG and HisZ subunits.

Its subcellular location is the cytoplasm. The catalysed reaction is 1-(5-phospho-beta-D-ribosyl)-ATP + diphosphate = 5-phospho-alpha-D-ribose 1-diphosphate + ATP. Its pathway is amino-acid biosynthesis; L-histidine biosynthesis; L-histidine from 5-phospho-alpha-D-ribose 1-diphosphate: step 1/9. Functionally, catalyzes the condensation of ATP and 5-phosphoribose 1-diphosphate to form N'-(5'-phosphoribosyl)-ATP (PR-ATP). Has a crucial role in the pathway because the rate of histidine biosynthesis seems to be controlled primarily by regulation of HisG enzymatic activity. The polypeptide is ATP phosphoribosyltransferase (Pseudomonas paraeruginosa (strain DSM 24068 / PA7) (Pseudomonas aeruginosa (strain PA7))).